The chain runs to 303 residues: Pyridoxal 5'-phosphate synthase subunit PdxS (303 aa).

D33 serves as a coordination point for D-ribose 5-phosphate. K90 acts as the Schiff-base intermediate with D-ribose 5-phosphate in catalysis. A D-ribose 5-phosphate-binding site is contributed by G162. D-glyceraldehyde 3-phosphate is bound at residue R174. D-ribose 5-phosphate is bound by residues G223 and 244 to 245; that span reads GS.

This sequence belongs to the PdxS/SNZ family. As to quaternary structure, in the presence of PdxT, forms a dodecamer of heterodimers.

It catalyses the reaction aldehydo-D-ribose 5-phosphate + D-glyceraldehyde 3-phosphate + L-glutamine = pyridoxal 5'-phosphate + L-glutamate + phosphate + 3 H2O + H(+). The protein operates within cofactor biosynthesis; pyridoxal 5'-phosphate biosynthesis. Catalyzes the formation of pyridoxal 5'-phosphate from ribose 5-phosphate (RBP), glyceraldehyde 3-phosphate (G3P) and ammonia. The ammonia is provided by the PdxT subunit. Can also use ribulose 5-phosphate and dihydroxyacetone phosphate as substrates, resulting from enzyme-catalyzed isomerization of RBP and G3P, respectively. This Mycolicibacterium smegmatis (strain ATCC 700084 / mc(2)155) (Mycobacterium smegmatis) protein is Pyridoxal 5'-phosphate synthase subunit PdxS.